Here is a 368-residue protein sequence, read N- to C-terminus: Phosphoribosylformylglycinamidine cyclo-ligase (368 aa).

It belongs to the AIR synthase family.

The protein resides in the cytoplasm. It catalyses the reaction 2-formamido-N(1)-(5-O-phospho-beta-D-ribosyl)acetamidine + ATP = 5-amino-1-(5-phospho-beta-D-ribosyl)imidazole + ADP + phosphate + H(+). It participates in purine metabolism; IMP biosynthesis via de novo pathway; 5-amino-1-(5-phospho-D-ribosyl)imidazole from N(2)-formyl-N(1)-(5-phospho-D-ribosyl)glycinamide: step 2/2. The chain is Phosphoribosylformylglycinamidine cyclo-ligase from Chelativorans sp. (strain BNC1).